A 380-amino-acid chain; its full sequence is Alanine racemase (380 aa).

Lys-41 functions as the Proton acceptor; specific for D-alanine in the catalytic mechanism. N6-(pyridoxal phosphate)lysine is present on Lys-41. Residue Arg-141 participates in substrate binding. Tyr-271 functions as the Proton acceptor; specific for L-alanine in the catalytic mechanism. Met-318 contributes to the substrate binding site.

Belongs to the alanine racemase family. It depends on pyridoxal 5'-phosphate as a cofactor.

The catalysed reaction is L-alanine = D-alanine. The protein operates within amino-acid biosynthesis; D-alanine biosynthesis; D-alanine from L-alanine: step 1/1. Functionally, catalyzes the interconversion of L-alanine and D-alanine. May also act on other amino acids. This chain is Alanine racemase (alr), found in Latilactobacillus sakei subsp. sakei (strain 23K) (Lactobacillus sakei subsp. sakei).